Here is a 360-residue protein sequence, read N- to C-terminus: Codeine O-demethylase (360 aa).

The Fe2OG dioxygenase domain maps to 211–311; the sequence is GLQTMRMNYY…RLSIATFHDS (101 aa). Tyr220 lines the 2-oxoglutarate pocket. Residues His235, Asp237, and His292 each coordinate Fe cation. 2 residues coordinate 2-oxoglutarate: Arg302 and Ser304.

Belongs to the iron/ascorbate-dependent oxidoreductase family. The cofactor is L-ascorbate. Fe cation is required as a cofactor. As to expression, mainly expressed in stems, capsules and leaves and, to a lower extent, in roots.

The catalysed reaction is codeine + 2-oxoglutarate + O2 = morphine + formaldehyde + succinate + CO2. It catalyses the reaction thebaine + 2-oxoglutarate + O2 = oripavine + formaldehyde + succinate + CO2. It carries out the reaction (S)-scoulerine + 2-oxoglutarate + O2 = (S)-3-O-demethylscoulerine + formaldehyde + succinate + CO2. The enzyme catalyses thebaine + 2-oxoglutarate + O2 = neopinone + formaldehyde + succinate + CO2. The catalysed reaction is (S)-reticuline + 2-oxoglutarate + O2 = (S)-6-O-demethylreticuline + formaldehyde + succinate + CO2. It catalyses the reaction (S)-tetrahydropalmatine + S-adenosyl-L-methionine = (S)-cis-N-methyltetrahydropalmatine + S-adenosyl-L-homocysteine. Its pathway is alkaloid biosynthesis; morphine biosynthesis. With respect to regulation, moderate substrate inhibition. Not inhibited in vitro by acylcyclohexanediones. In terms of biological role, non-heme dioxygenase involved in biosynthesis of morphinan-type benzylisoquinoline and opiate alkaloids natural products. Mediates the conversion of codeine to morphine. Also catalyzes, with lower efficiency, the 3-O-demethylation of thebaine to oripavine and of (S)-scoulerine to 3-O-demethylscoulerine. Supports, with a lower turnover, the conversion of codeinone to morphinone, of thebaine to neopinone, and of neopine to neomorphine. Supports dealkylation reactions such as O,O-demethylenation in the metabolism of protopine, benzo[c]phenanthridine, and rhoeadine alkaloids; cleaves a methylenedioxy bridge leaving two hydroxyl groups. Catalyzes the O,O-demethylenation of methylenedioxy bridges on protopine alkaloids such as allocryptopine, cryptopine and protopine. No activity with (S)-reticuline, salutaridine, papaverine, (S)-corytuberine, oripavine, pavine or noscapine. This Papaver somniferum (Opium poppy) protein is Codeine O-demethylase.